A 545-amino-acid polypeptide reads, in one-letter code: Glucose-6-phosphate isomerase (545 aa).

Residue Glu-349 is the Proton donor of the active site. Active-site residues include His-380 and Lys-509.

It belongs to the GPI family.

The protein resides in the cytoplasm. It carries out the reaction alpha-D-glucose 6-phosphate = beta-D-fructose 6-phosphate. It functions in the pathway carbohydrate biosynthesis; gluconeogenesis. It participates in carbohydrate degradation; glycolysis; D-glyceraldehyde 3-phosphate and glycerone phosphate from D-glucose: step 2/4. Catalyzes the reversible isomerization of glucose-6-phosphate to fructose-6-phosphate. This Chelativorans sp. (strain BNC1) protein is Glucose-6-phosphate isomerase.